A 234-amino-acid polypeptide reads, in one-letter code: Protein-toxin resistance protein KTD1 (234 aa).

At Met-1–His-47 the chain is on the cytoplasmic side. A helical membrane pass occupies residues Cys-48 to Phe-68. The segment at Phe-68–Thr-75 is required for resistance to killer toxin K28, a protein-toxin encoded by the M28 virus. Over His-69 to Val-76 the chain is Extracellular. A helical membrane pass occupies residues Ile-77 to Phe-97. Residues Gly-98–Pro-234 lie on the Cytoplasmic side of the membrane. The required for resistance to killer toxin K28, a protein-toxin encoded by the M28 virus stretch occupies residues Phe-147–Pro-234. The disordered stretch occupies residues Ser-168–Gly-187. Residues Ala-177 to Gly-187 are compositionally biased toward polar residues. A Glycyl lysine isopeptide (Lys-Gly) (interchain with G-Cter in ubiquitin) cross-link involves residue Lys-217.

Belongs to the DUP/COS family.

It is found in the vacuole membrane. It localises to the golgi apparatus. The protein localises to the trans-Golgi network membrane. The protein resides in the endosome membrane. In terms of biological role, confers resistance to killer toxin K28, a protein-toxin encoded by the M28 virus that uses S.cerevisiae as a host. Probably acts against K28 after endocytosis of the protein-toxin. This is Protein-toxin resistance protein KTD1 from Saccharomyces cerevisiae (strain ATCC 204508 / S288c) (Baker's yeast).